Consider the following 396-residue polypeptide: Coiled-coil domain-containing protein 1 (396 aa).

An N-terminal signal peptide occupies residues 1–21; that stretch reads MAARSALCFLAIITLFVYACG. Coiled coils occupy residues 53-73, 109-129, 208-242, and 287-308; these read KIDSKLDSILSELQKEQNDRD, EVEKIEEAVDDVIDMIDDIID, DKESKKIDETVQELLDEIKDVVEDANDDVNDILDT, and YEEIEEKMDEVDDFIDDAIDEH. Over residues 231 to 256 the composition is skewed to acidic residues; that stretch reads DANDDVNDILDTDDEDEDEDVQEEKD. Disordered stretches follow at residues 231–260 and 288–378; these read DANDDVNDILDTDDEDEDEDVQEEKDEDIH and EEIE…VADD.

As to expression, component of the acid-insoluble and acid-soluble organic matrix of calcified layers of the shell (at protein level).

It is found in the secreted. The polypeptide is Coiled-coil domain-containing protein 1 (Lottia gigantea (Giant owl limpet)).